Reading from the N-terminus, the 765-residue chain is Alpha,alpha-trehalose phosphorylase (765 aa).

Position 352 to 353 (tryptophan 352 to aspartate 353) interacts with substrate. The active-site Proton donor is the glutamate 479. Lysine 591 to glutamine 592 contacts substrate.

Belongs to the glycosyl hydrolase 65 family. In terms of assembly, homodimer.

The enzyme catalyses alpha,alpha-trehalose + phosphate = beta-D-glucose 1-phosphate + D-glucose. It participates in glycan degradation; trehalose degradation. Its function is as follows. Catalyzes the reversible phosphorolytic cleavage of trehalose. Phosphorolysis is specific for trehalose. The protein is Alpha,alpha-trehalose phosphorylase (treP) of Geobacillus stearothermophilus (Bacillus stearothermophilus).